The sequence spans 265 residues: Tryptophan synthase alpha chain (265 aa).

Residues Glu-41 and Asp-52 each act as proton acceptor in the active site.

This sequence belongs to the TrpA family. Tetramer of two alpha and two beta chains.

It carries out the reaction (1S,2R)-1-C-(indol-3-yl)glycerol 3-phosphate + L-serine = D-glyceraldehyde 3-phosphate + L-tryptophan + H2O. Its pathway is amino-acid biosynthesis; L-tryptophan biosynthesis; L-tryptophan from chorismate: step 5/5. Its function is as follows. The alpha subunit is responsible for the aldol cleavage of indoleglycerol phosphate to indole and glyceraldehyde 3-phosphate. The protein is Tryptophan synthase alpha chain of Bacillus velezensis (strain DSM 23117 / BGSC 10A6 / LMG 26770 / FZB42) (Bacillus amyloliquefaciens subsp. plantarum).